Here is a 248-residue protein sequence, read N- to C-terminus: uncharacterized protein (248 aa).

A helical transmembrane segment spans residues 7–25 (TIFIGGIYGLGVYIGAVAW).

It belongs to the methyltransferase superfamily. METL family.

Its subcellular location is the mitochondrion inner membrane. Functionally, probable methyltransferase. This is an uncharacterized protein from Schizosaccharomyces pombe (strain 972 / ATCC 24843) (Fission yeast).